The primary structure comprises 475 residues: Ribulose bisphosphate carboxylase large chain (475 aa).

Positions 1–2 (MS) are excised as a propeptide. An N-acetylproline modification is found at P3. An N6,N6,N6-trimethyllysine modification is found at K14. The substrate site is built by N123 and T173. K175 (proton acceptor) is an active-site residue. Position 177 (K177) interacts with substrate. 3 residues coordinate Mg(2+): K201, D203, and E204. K201 is subject to N6-carboxylysine. H294 serves as the catalytic Proton acceptor. Substrate contacts are provided by R295, H327, and S379.

It belongs to the RuBisCO large chain family. Type I subfamily. In terms of assembly, heterohexadecamer of 8 large chains and 8 small chains; disulfide-linked. The disulfide link is formed within the large subunit homodimers. Requires Mg(2+) as cofactor. In terms of processing, the disulfide bond which can form in the large chain dimeric partners within the hexadecamer appears to be associated with oxidative stress and protein turnover.

The protein localises to the plastid. It localises to the chloroplast. The enzyme catalyses 2 (2R)-3-phosphoglycerate + 2 H(+) = D-ribulose 1,5-bisphosphate + CO2 + H2O. It carries out the reaction D-ribulose 1,5-bisphosphate + O2 = 2-phosphoglycolate + (2R)-3-phosphoglycerate + 2 H(+). Functionally, ruBisCO catalyzes two reactions: the carboxylation of D-ribulose 1,5-bisphosphate, the primary event in carbon dioxide fixation, as well as the oxidative fragmentation of the pentose substrate in the photorespiration process. Both reactions occur simultaneously and in competition at the same active site. This chain is Ribulose bisphosphate carboxylase large chain, found in Cerastium glomeratum (Sticky chickweed).